A 1444-amino-acid chain; its full sequence is Rho GTPase-activating protein 31 (1444 aa).

One can recognise a Rho-GAP domain in the interval 21–216 (CDLTEYLESS…FILNHVDQIF (196 aa)). Phosphoserine is present on S272. T286 is modified (phosphothreonine). A phosphoserine mark is found at S346, S349, and S387. The segment at 398-427 (WGQEGMPPGAEGGFDVSSDRSHLQGAQARP) is disordered. At S476 the chain carries Phosphoserine. The interval 504–631 (TNSTPCRTPP…ESSTLQESPR (128 aa)) is disordered. The span at 515 to 534 (ELQSLSSLEEFSFHGSESGG) shows a compositional bias: low complexity. A compositionally biased stretch (basic and acidic residues) spans 600–619 (NELEKRPNPEKVVEEGREAG). At T679 the chain carries Phosphothreonine. 2 disordered regions span residues 688 to 893 (SSLG…EDDT) and 906 to 1108 (EPWE…SSLN). 2 positions are modified to phosphoserine: S701 and S712. The segment covering 722-734 (PANQSTQGASTAA) has biased composition (polar residues). A compositionally biased stretch (basic and acidic residues) spans 735 to 745 (SREKPEPEQGL). Pro residues predominate over residues 777 to 790 (LSPPLPPAPPPPTP). S778 is subject to Phosphoserine. T789 is modified (phosphothreonine). Basic and acidic residues predominate over residues 803–817 (GPEREDSSRKLRTDL). Over residues 822-834 (LKSQDSPEISSLC) the composition is skewed to polar residues. Basic and acidic residues predominate over residues 839 to 848 (ATPRHSDKQN). Residues 960–977 (TVKSQWTLEVPSSSSCAN) show a composition bias toward polar residues. Residue S974 is modified to Phosphoserine. The span at 992–1008 (PRREITGWDEKALRSFR) shows a compositional bias: basic and acidic residues. Polar residues predominate over residues 1028 to 1038 (VQPNPAETSPI). A compositionally biased stretch (low complexity) spans 1064–1075 (GPESSKESSPSV). Residues S1105, S1106, and S1178 each carry the phosphoserine modification. 2 stretches are compositionally biased toward polar residues: residues 1211 to 1224 (QIPQ…SGEN) and 1234 to 1245 (EGPSSTSGTTQK). The segment at 1211 to 1346 (QIPQPLPSQS…HRSRPGRPQS (136 aa)) is disordered. A compositionally biased stretch (basic and acidic residues) spans 1246 to 1265 (PAKDDSPSSLESSKEEKPKQ). Composition is skewed to polar residues over residues 1292–1303 (PGSSNLLSTQDA) and 1314–1323 (TEPSGDNLLS).

In terms of assembly, interacts with ITSN1, which inhibits GAP activity. Interacts with PARVA. Interacts with GTP-loaded RHOU. Phosphorylation on Thr-789 reduces GAP activity.

Its subcellular location is the cell projection. The protein resides in the lamellipodium. The protein localises to the cell junction. It localises to the focal adhesion. Functionally, functions as a GTPase-activating protein (GAP) for RAC1 and CDC42. Required for cell spreading, polarized lamellipodia formation and cell migration. The chain is Rho GTPase-activating protein 31 (ARHGAP31) from Homo sapiens (Human).